Here is a 101-residue protein sequence, read N- to C-terminus: Small ribosomal subunit protein uS14 (101 aa).

Belongs to the universal ribosomal protein uS14 family. As to quaternary structure, part of the 30S ribosomal subunit. Contacts proteins S3 and S10.

Its function is as follows. Binds 16S rRNA, required for the assembly of 30S particles and may also be responsible for determining the conformation of the 16S rRNA at the A site. The sequence is that of Small ribosomal subunit protein uS14 from Paraburkholderia phymatum (strain DSM 17167 / CIP 108236 / LMG 21445 / STM815) (Burkholderia phymatum).